The primary structure comprises 286 residues: MLLEGIETLLVLSKEKTMSRTGSQLYISQSAVSKRIANLEKKLGKKLIVPAGRHIKLTADAEQLIASIGPTFNELHGLIFEQQTLEDNTLLRMDCSETLVAGYLGQTMGQHRKQDPHWVITTNHTPRIVENVQSGKATLGFCAGYLPANHGLLTFHLGDEPFTVISQAPLHALPSELITNDLANPANTYQAAMLHKQGIRPAMEMDSYTAAAQLALGGMLPALVPRSIVSTLKIEPQHCFDFAELADLTRPIHICLRASRYRSSRVQALITALHDAVPKAVLAPSA.

Positions Met-1–Thr-58 constitute an HTH lysR-type domain. The H-T-H motif DNA-binding region spans Met-18–Ala-37.

It belongs to the LysR transcriptional regulatory family.

This is an uncharacterized protein from Vibrio cholerae serotype O1 (strain ATCC 39315 / El Tor Inaba N16961).